The primary structure comprises 96 residues: Putative pterin-4-alpha-carbinolamine dehydratase (96 aa).

This sequence belongs to the pterin-4-alpha-carbinolamine dehydratase family.

It catalyses the reaction (4aS,6R)-4a-hydroxy-L-erythro-5,6,7,8-tetrahydrobiopterin = (6R)-L-erythro-6,7-dihydrobiopterin + H2O. This is Putative pterin-4-alpha-carbinolamine dehydratase from Paraburkholderia xenovorans (strain LB400).